The primary structure comprises 173 residues: MRPEDKKKVVEDLHVRAEKAKLAILTDFRGLNVAAMSELRKGLRAASAEYQVVKNTLMTLAIEGTDLEVLKDELKGPCAVCLAYEDPVEPTKALTEFAKNNKKFEIKIGVLDGKLVNLDGLKALADLPPREVLLGQIAGTLNSLPTGLVQCLAGVPRKLLYALQAVRDQKEAA.

It belongs to the universal ribosomal protein uL10 family. In terms of assembly, part of the ribosomal stalk of the 50S ribosomal subunit. The N-terminus interacts with L11 and the large rRNA to form the base of the stalk. The C-terminus forms an elongated spine to which L12 dimers bind in a sequential fashion forming a multimeric L10(L12)X complex.

Functionally, forms part of the ribosomal stalk, playing a central role in the interaction of the ribosome with GTP-bound translation factors. The polypeptide is Large ribosomal subunit protein uL10 (Desulfatibacillum aliphaticivorans).